Consider the following 198-residue polypeptide: MTDALDSLISNHLARSRAAMERAAVDGALLASAERIATAIIGALRGGHKLLIVGNGGSAADAQHIAAEIVGRYKQERPAFAAIALTTDTSALTAIGNDYGFDHVFARQVEGLGASGDVLLAISTSGRSPSILNALRKARERGLVTIGFTGTNGLGMGELCDELLVAPSDDTPLIQQIHLATAHGICETIEAALMQDAR.

Positions 40-198 constitute an SIS domain; that stretch reads IIGALRGGHK…IEAALMQDAR (159 aa). 55–57 lines the substrate pocket; sequence NGG. Residues H64 and E68 each coordinate Zn(2+). Substrate-binding positions include E68, 97–98, 123–125, S128, and Q175; these read ND and STS. The Zn(2+) site is built by Q175 and H183.

This sequence belongs to the SIS family. GmhA subfamily. Homotetramer. Zn(2+) is required as a cofactor.

The protein localises to the cytoplasm. The enzyme catalyses 2 D-sedoheptulose 7-phosphate = D-glycero-alpha-D-manno-heptose 7-phosphate + D-glycero-beta-D-manno-heptose 7-phosphate. It participates in carbohydrate biosynthesis; D-glycero-D-manno-heptose 7-phosphate biosynthesis; D-glycero-alpha-D-manno-heptose 7-phosphate and D-glycero-beta-D-manno-heptose 7-phosphate from sedoheptulose 7-phosphate: step 1/1. Functionally, catalyzes the isomerization of sedoheptulose 7-phosphate in D-glycero-D-manno-heptose 7-phosphate. The protein is Phosphoheptose isomerase of Bradyrhizobium sp. (strain ORS 278).